Reading from the N-terminus, the 816-residue chain is H(+)/Cl(-) exchange transporter 5 (816 aa).

At 1 to 124 the chain is on the cytoplasmic side; sequence MAMWQGAMDN…WALIHSVSDA (124 aa). 2 consecutive transmembrane segments (helical) span residues 125-162 and 208-231; these read FSGW…ICTG and VNYF…VKVF. Positions 237–241 match the Selectivity filter part_1 motif; it reads GSGIP. Ser-238 contributes to the chloride binding site. The segment at residues 240-247 is an intramembrane region (helical); it reads IPEIKTIL. 2 consecutive transmembrane segments (helical) span residues 256 to 275 and 281 to 300; these read LGKW…VSSG and EGPL…HRFN. The Selectivity filter part_2 signature appears at 279–283; it reads GKEGP. 2 consecutive intramembrane regions (helical) follow at residues 312–324 and 328–336; these read VLSA…VSVA and PIGGVLFSL. The next 5 helical transmembrane spans lie at 348 to 366, 389 to 414, 422 to 442, 498 to 518, and 523 to 542; these read LWRS…RSIN, LVPF…IAWC, LGKY…ILAF, MWQL…TFGM, and GLFI…LGVG. The Selectivity filter part_3 signature appears at 523–527; the sequence is GLFIP. Phe-525 lines the chloride pocket. An intramembrane region (helical) is located at residues 570–584; the sequence is GLYAMVGAAACLGGV. The segment at residues 585–587 is an intramembrane region (note=Loop between two helices); it reads TRM. Positions 588–599 form an intramembrane region, helical; that stretch reads TVSLVVIMFELT. Residues 600-604 constitute an intramembrane region (note=Loop between two helices); the sequence is GGLEY. The chain crosses the membrane as a helical span at residues 605-622; it reads IVPLMAAAMTSKWVADAL. Residues 623–816 are Cytoplasmic-facing; the sequence is GREGIYDAHI…NQDPDSILFN (194 aa). Position 628 (Tyr-628) interacts with chloride. CBS domains lie at 656 to 720 and 752 to 812; these read MKPR…ARKK and ILDL…DPDS. ATP is bound by residues Thr-666, 687–689, and 794–797; these read YSG and TKKD.

Belongs to the chloride channel (TC 2.A.49) family. ClC-5/CLCN5 subfamily. Interacts with NEDD4 and NEDD4L. In terms of processing, ubiquitinated by NEDD4L in the presence of albumin; which promotes endocytosis and proteasomal degradation.

Its subcellular location is the golgi apparatus membrane. The protein resides in the endosome membrane. It is found in the cell membrane. It catalyses the reaction 2 chloride(in) + H(+)(out) = 2 chloride(out) + H(+)(in). Its function is as follows. Proton-coupled chloride transporter. Functions as antiport system and exchanges chloride ions against protons. Important for normal acidification of the endosome lumen. May play an important role in renal tubular function. The CLC channel family contains both chloride channels and proton-coupled anion transporters that exchange chloride or another anion for protons. The absence of conserved gating glutamate residues is typical for family members that function as channels. The chain is H(+)/Cl(-) exchange transporter 5 (CLCN5) from Oryctolagus cuniculus (Rabbit).